The sequence spans 434 residues: [Pyruvate dehydrogenase (acetyl-transferring)] kinase isozyme 1, mitochondrial (434 aa).

The N-terminal 26 residues, 1–26, are a transit peptide targeting the mitochondrion; that stretch reads MRLARLLRGGTSVRPLCAVPCASRSL. The residue at position 136 (tyrosine 136) is a Phosphotyrosine; by FGFR1. Residues 161 to 391 form the Histidine kinase domain; that stretch reads TEYKESFGVD…DAVIYIKALS (231 aa). Position 241 is a phosphotyrosine; by FGFR1, ABL1, FLT3 and JAK2 (tyrosine 241). Phosphotyrosine; by FGFR1 is present on tyrosine 242. Residues 277 to 284, aspartate 316, 335 to 336, and 352 to 357 each bind ATP; these read ELFKNAMR, ST, and GFGYGL. Threonine 336 bears the Phosphothreonine mark. An N6-succinyllysine modification is found at lysine 403.

The protein belongs to the PDK/BCKDK protein kinase family. As to quaternary structure, homodimer, and heterodimer with PDK2. Interacts with the pyruvate dehydrogenase complex subunit DLAT, and is part of the multimeric pyruvate dehydrogenase complex that contains multiple copies of pyruvate dehydrogenase (E1), dihydrolipoamide acetyltransferase (DLAT, E2) and lipoamide dehydrogenase (DLD, E3). Interacts with phosphoglycerate kinase PGK1; the interaction is direct, occurs under hypoxic conditions and leads to PDK1-mediated inhibition of pyruvate dehydrogenase complex activity. Phosphorylated by constitutively activated ABL1, FGFR1, FLT3 and JAK2 (in vitro), and this may also occur in cancer cells that express constitutively activated ABL1, FGFR1, FLT3 and JAK2. Phosphorylation at Tyr-241 and Tyr-242 strongly increases kinase activity, while phosphorylation at Tyr-136 has a lesser effect. Phosphorylated under hypoxic conditions at Thr-336 by phosphoglycerate kinase PGK1 which has an activating effect. In terms of tissue distribution, detected in pancreas islets (at protein level). Expressed predominantly in the heart.

The protein resides in the mitochondrion matrix. It carries out the reaction L-seryl-[pyruvate dehydrogenase E1 alpha subunit] + ATP = O-phospho-L-seryl-[pyruvate dehydrogenase E1 alpha subunit] + ADP + H(+). Its activity is regulated as follows. Activated by binding to the pyruvate dehydrogenase complex subunit DLAT. Strongly activated by NADH plus acetyl-coenzyme A. Inhibited by dichloroacetate. Its function is as follows. Kinase that plays a key role in regulation of glucose and fatty acid metabolism and homeostasis via phosphorylation of the pyruvate dehydrogenase subunits PDHA1 and PDHA2. This inhibits pyruvate dehydrogenase activity, and thereby regulates metabolite flux through the tricarboxylic acid cycle, down-regulates aerobic respiration and inhibits the formation of acetyl-coenzyme A from pyruvate. Plays an important role in cellular responses to hypoxia and is important for cell proliferation under hypoxia. This Rattus norvegicus (Rat) protein is [Pyruvate dehydrogenase (acetyl-transferring)] kinase isozyme 1, mitochondrial (Pdk1).